The sequence spans 403 residues: Peptidyl-prolyl cis-trans isomerase FKBP8 (403 aa).

The tract at residues 26 to 54 (VLDGVDDAEEEDDLSGLPPLEDMGQPTVE) is disordered. Residues 28-39 (DGVDDAEEEDDL) show a composition bias toward acidic residues. In terms of domain architecture, PPIase FKBP-type spans 110 to 195 (GQVVTVHLQM…CLEVTLKTAE (86 aa)). The TPR 1 repeat unit spans residues 212 to 245 (ANRKRECGNAHYQRADFVLAANSYDLAIKAITSN). Glycyl lysine isopeptide (Lys-Gly) (interchain with G-Cter in ubiquitin) cross-links involve residues K240, K262, K264, and K275. TPR repeat units lie at residues 263–296 (VKCL…QPDN) and 297–330 (IKAL…EPSN). The residue at position 287 (S287) is a Phosphoserine. Glycyl lysine isopeptide (Lys-Gly) (interchain with G-Cter in ubiquitin) cross-links involve residues K298, K305, K325, K331, K339, K342, and K343. A helical membrane pass occupies residues 381–401 (WLFGATAVALGGVALSVVIAA).

As to quaternary structure, homomultimers or heteromultimers (Potential). Forms heterodimer with calmodulin. When activated by calmodulin and calcium, interacts with the BH4 domain of BCL2 and weakly with BCLX isoform Bcl-X(L). Does not bind and inhibit calcineurin. Interacts with ZFYVE27; may negatively regulate ZFYVE27 phosphorylation. Ca(2+) is required as a cofactor. In terms of processing, ubiquitinated by PRKN during mitophagy, leading to its degradation and enhancement of mitophagy. Deubiquitinated by USP30.

Its subcellular location is the mitochondrion membrane. The enzyme catalyses [protein]-peptidylproline (omega=180) = [protein]-peptidylproline (omega=0). Its function is as follows. Constitutively inactive PPiase, which becomes active when bound to calmodulin and calcium. Seems to act as a chaperone for BCL2, targets it to the mitochondria and modulates its phosphorylation state. The BCL2/FKBP8/calmodulin/calcium complex probably interferes with the binding of BCL2 to its targets. The active form of FKBP8 may therefore play a role in the regulation of apoptosis. This chain is Peptidyl-prolyl cis-trans isomerase FKBP8 (Fkbp8), found in Rattus norvegicus (Rat).